The sequence spans 502 residues: ATP synthase subunit alpha (502 aa).

The disordered stretch occupies residues 115–135 (VDGLGPINTTNTRPIESPAPG). Residue 169–176 (GDRQTGKT) participates in ATP binding.

It belongs to the ATPase alpha/beta chains family. F-type ATPases have 2 components, CF(1) - the catalytic core - and CF(0) - the membrane proton channel. CF(1) has five subunits: alpha(3), beta(3), gamma(1), delta(1), epsilon(1). CF(0) has three main subunits: a(1), b(2) and c(9-12). The alpha and beta chains form an alternating ring which encloses part of the gamma chain. CF(1) is attached to CF(0) by a central stalk formed by the gamma and epsilon chains, while a peripheral stalk is formed by the delta and b chains.

The protein localises to the cell membrane. It catalyses the reaction ATP + H2O + 4 H(+)(in) = ADP + phosphate + 5 H(+)(out). Produces ATP from ADP in the presence of a proton gradient across the membrane. The alpha chain is a regulatory subunit. The chain is ATP synthase subunit alpha from Bacillus cereus (strain G9842).